We begin with the raw amino-acid sequence, 455 residues long: MTTMAAATLLRATPHFSGLAAGRTFLLQGLLRLLKAPALPLLCRGLAVEAKKTYVRDKPHVNVGTIGHVDHGKTTLTAAITKILAEGGGAKFKKYEEIDNAPEERARGITINAAHVEYSTAARHYAHTDCPGHADYVKNMITGTAPLDGCILVVAANDGPMPQTREHLLLARQIGVEHVVVYVNKADAVQDSEMVELVELEIRELLTEFGYKGEETPVIVGSALCALEGRDPELGLKSVQKLLDAVDTYIPVPARDLEKPFLLPVEAVYSVPGRGTVVTGTLERGILKKGDECELLGHSKNIRTVVTGIEMFHKSLERAEAGDNLGALVRGLKREDLRRGLVMVKPGSIKPHQKVEAQVYILSKEEGGRHKPFVSHFMPVMFSLTWDMACRIILPPEKELAMPGEDLKFNLILRQPMILEKGQRFTLRDGNRTIGTGLVTNTLAMTEEEKNIKWG.

Residues 1–46 (MTTMAAATLLRATPHFSGLAAGRTFLLQGLLRLLKAPALPLLCRGL) constitute a mitochondrion transit peptide. The tr-type G domain occupies 58-254 (KPHVNVGTIG…AVDTYIPVPA (197 aa)). A G1 region spans residues 67-74 (GHVDHGKT). The GTP site is built by aspartate 70, glycine 72, lysine 73, threonine 74, and threonine 75. Threonine 74 serves as a coordination point for Mg(2+). An N6-acetyllysine modification is found at lysine 82. Lysine 91 bears the N6-acetyllysine; alternate mark. At lysine 91 the chain carries N6-succinyllysine; alternate. A G2 region spans residues 108-112 (GITIN). Residues 129-132 (DCPG) form a G3 region. GTP is bound by residues asparagine 184, aspartate 187, serine 222, alanine 223, and leucine 224. The segment at 184-187 (NKAD) is G4. The segment at 222–224 (SAL) is G5. Lysine 237 carries the N6-succinyllysine modification. Residue lysine 259 is modified to N6-acetyllysine. Threonine 281 bears the Phosphothreonine mark. Residue lysine 289 is modified to N6-succinyllysine. Phosphoserine is present on serine 315. Residues lysine 364 and lysine 421 each carry the N6-acetyllysine modification.

Belongs to the TRAFAC class translation factor GTPase superfamily. Classic translation factor GTPase family. EF-Tu/EF-1A subfamily. Interacts with NLRX1. Interacts with ATG16L1. As to quaternary structure, (Microbial infection) Interacts with human parainfluenza virus 3 matrix protein; this interaction inhibits RLR-mediated type I interferon production while promoting autophagy. In terms of assembly, (Microbial infection) Interacts with Hantaan hantavirus glycoprotein N; this interaction contributes to the virus-induced degradation of mitochondria by autophagy, which leads to degradation of MAVS and inhibition of type I interferon (IFN) responses.

It is found in the mitochondrion. The enzyme catalyses GTP + H2O = GDP + phosphate + H(+). GTP hydrolase that promotes the GTP-dependent binding of aminoacyl-tRNA to the A-site of ribosomes during protein biosynthesis. Also plays a role in the regulation of autophagy and innate immunity. Recruits ATG5-ATG12 and NLRX1 at mitochondria and serves as a checkpoint of the RIGI-MAVS pathway. In turn, inhibits RLR-mediated type I interferon while promoting autophagy. In Homo sapiens (Human), this protein is Elongation factor Tu, mitochondrial (TUFM).